The primary structure comprises 73 residues: Small ribosomal subunit protein bS18 (73 aa).

It belongs to the bacterial ribosomal protein bS18 family. Part of the 30S ribosomal subunit. Forms a tight heterodimer with protein bS6.

Binds as a heterodimer with protein bS6 to the central domain of the 16S rRNA, where it helps stabilize the platform of the 30S subunit. The polypeptide is Small ribosomal subunit protein bS18 (Neorickettsia sennetsu (strain ATCC VR-367 / Miyayama) (Ehrlichia sennetsu)).